The sequence spans 181 residues: TATA-box-binding protein (181 aa).

A run of 2 repeats spans residues 7-83 (IVNV…IKEL) and 98-173 (VQNM…SKTL).

Belongs to the TBP family.

Functionally, general factor that plays a role in the activation of archaeal genes transcribed by RNA polymerase. Binds specifically to the TATA box promoter element which lies close to the position of transcription initiation. The chain is TATA-box-binding protein from Methanococcus maripaludis (strain C6 / ATCC BAA-1332).